The chain runs to 96 residues: MGCRDILLTFSVALLLISLFQIWLFREGRQVPELSDDQLGKDRNTLMTSKNKNKNEDVQRLFQRYFKGRSFGLNNTNSRFEDSNRRIPSSPDRLHN.

The N-terminal stretch at 1–28 is a signal peptide; it reads MGCRDILLTFSVALLLISLFQIWLFREG. A disordered region spans residues 71-96; sequence FGLNNTNSRFEDSNRRIPSSPDRLHN. Asn74 carries an N-linked (GlcNAc...) asparagine glycan. 2 positions are modified to hydroxyproline: Pro88 and Pro91. Residue Pro91 is glycosylated (O-linked (Ara...) hydroxyproline).

Belongs to the CLV3/ESR signal peptide family. The O-glycosylation (arabinosylation) of the hydroxyproline Pro-91 enhances binding affinity of the CLE43p peptide for its receptor. In terms of tissue distribution, expressed at low levels in seedlings.

Its subcellular location is the secreted. The protein resides in the extracellular space. Functionally, extracellular signal peptide that regulates cell fate. Promotes pollen tube growth prolongation in a SKM1 and SKM2-dependent manner, especially under relatively high temperature (at 30 degrees Celsius), thus conferring tolerance against high temperature probably through the maintenance of mitochondrial activity. The chain is CLAVATA3/ESR (CLE)-related protein 43 from Arabidopsis thaliana (Mouse-ear cress).